Reading from the N-terminus, the 85-residue chain is Small ribosomal subunit protein uS17 (85 aa).

This sequence belongs to the universal ribosomal protein uS17 family. In terms of assembly, part of the 30S ribosomal subunit.

Functionally, one of the primary rRNA binding proteins, it binds specifically to the 5'-end of 16S ribosomal RNA. This chain is Small ribosomal subunit protein uS17, found in Lachnoclostridium phytofermentans (strain ATCC 700394 / DSM 18823 / ISDg) (Clostridium phytofermentans).